The primary structure comprises 213 residues: Peptidyl-tRNA hydrolase (213 aa).

Residue Tyr-15 participates in tRNA binding. The active-site Proton acceptor is the His-20. TRNA is bound by residues Tyr-66, Asn-68, and Asn-114. Residues Met-186 to Ala-213 are disordered. Over residues Pro-196–Ala-213 the composition is skewed to pro residues.

It belongs to the PTH family. As to quaternary structure, monomer.

The protein localises to the cytoplasm. It catalyses the reaction an N-acyl-L-alpha-aminoacyl-tRNA + H2O = an N-acyl-L-amino acid + a tRNA + H(+). Functionally, hydrolyzes ribosome-free peptidyl-tRNAs (with 1 or more amino acids incorporated), which drop off the ribosome during protein synthesis, or as a result of ribosome stalling. In terms of biological role, catalyzes the release of premature peptidyl moieties from peptidyl-tRNA molecules trapped in stalled 50S ribosomal subunits, and thus maintains levels of free tRNAs and 50S ribosomes. The sequence is that of Peptidyl-tRNA hydrolase from Leptothrix cholodnii (strain ATCC 51168 / LMG 8142 / SP-6) (Leptothrix discophora (strain SP-6)).